Consider the following 395-residue polypeptide: MNNVHELQFLKEKIQELKNDGVYRKLPILEGPNEAEIMLNGKKVINLSSNNYLGFANHPQIKKAAIDAVEKYGVGAGAVRTIVGNMDIHEELERVLAEFKREEAVMVFQSGFNCNAGTIQAVTEKGDLIISDQLNHASIIDGARLSRADKTVFKHADMDNLEQVLKENQDKYRNKLIITDGVFSMDGDIAPLPDIVELAEKYGAMTYVDDAHGSGVLGENGRGTVDHFGLHGRVDFTIGTLSKAIGVIGGYVAGSHTMKEWLSHRGRPLLFSTSLPPAAVGSIIEAVKLLMSTTEYTDRLWDNAKYFKEKISQLGFDIGHSGTPITPVIIGEEGKAMAFSKKLLENGVFVSGIIFPTVAKGTGRVRCMVTAGHTKEQLDRAVEVFKKVGQEMDLL.

Arg24 contributes to the substrate binding site. 111–112 (GF) lines the pyridoxal 5'-phosphate pocket. His136 contacts substrate. Pyridoxal 5'-phosphate-binding positions include Ser184, 209–212 (DDAH), and 240–243 (TLSK). Lys243 bears the N6-(pyridoxal phosphate)lysine mark. Substrate is bound at residue Thr357.

Belongs to the class-II pyridoxal-phosphate-dependent aminotransferase family. BioF subfamily. In terms of assembly, homodimer. Pyridoxal 5'-phosphate serves as cofactor.

The enzyme catalyses 6-carboxyhexanoyl-[ACP] + L-alanine + H(+) = (8S)-8-amino-7-oxononanoate + holo-[ACP] + CO2. It participates in cofactor biosynthesis; biotin biosynthesis. Catalyzes the decarboxylative condensation of pimeloyl-[acyl-carrier protein] and L-alanine to produce 8-amino-7-oxononanoate (AON), [acyl-carrier protein], and carbon dioxide. This chain is 8-amino-7-oxononanoate synthase, found in Alkaliphilus metalliredigens (strain QYMF).